Consider the following 419-residue polypeptide: Phosphatidylinositol 5-phosphate 4-kinase type-2 gamma (419 aa).

The PIPK domain occupies 46–418; the sequence is ASDPLISVFM…RFLEFVTNIF (373 aa). Residues 299–310 show a composition bias toward acidic residues; the sequence is QEEEEDLEEDHT. The interval 299 to 320 is disordered; the sequence is QEEEEDLEEDHTENESSPHMNV.

Post-translationally, phosphorylated, phosphorylation is induced by EGF.

The protein resides in the endoplasmic reticulum. It localises to the cytoplasm. It carries out the reaction a 1,2-diacyl-sn-glycero-3-phospho-(1D-myo-inositol-5-phosphate) + ATP = a 1,2-diacyl-sn-glycero-3-phospho-(1D-myo-inositol-4,5-bisphosphate) + ADP + H(+). It catalyses the reaction 1,2-dihexadecanoyl-sn-glycero-3-phospho-(1D-myo-inositol-5-phosphate) + ATP = 1,2-dihexadecanoyl-sn-glycero-3-phospho-(1D-myo-inositol-4,5-bisphosphate) + ADP + H(+). The catalysed reaction is 1,2-dihexadecanoyl-sn-glycero-3-phospho-(1D-myo-inositol-5-phosphate) + GTP = 1,2-dihexadecanoyl-sn-glycero-3-phospho-(1D-myo-inositol-4,5-bisphosphate) + GDP + H(+). In terms of biological role, phosphatidylinositol 5-phosphate 4-kinase with low enzymatic activity. May be a GTP sensor, has higher GTP-dependent kinase activity than ATP-dependent kinase activity. The polypeptide is Phosphatidylinositol 5-phosphate 4-kinase type-2 gamma (pip4k2c) (Xenopus tropicalis (Western clawed frog)).